A 128-amino-acid polypeptide reads, in one-letter code: Small ribosomal subunit protein eS8 (128 aa).

Residues 1-37 form a disordered region; the sequence is MGYFQGNDFRKITGGKKGKHRDKRKFELGSPPTETKL. Residues 13–23 are compositionally biased toward basic residues; it reads TGGKKGKHRDK.

This sequence belongs to the eukaryotic ribosomal protein eS8 family. Part of the 30S ribosomal subunit.

The sequence is that of Small ribosomal subunit protein eS8 from Sulfurisphaera tokodaii (strain DSM 16993 / JCM 10545 / NBRC 100140 / 7) (Sulfolobus tokodaii).